We begin with the raw amino-acid sequence, 146 residues long: 3-hydroxyacyl-[acyl-carrier-protein] dehydratase FabZ (146 aa).

Residue H47 is part of the active site.

It belongs to the thioester dehydratase family. FabZ subfamily.

It localises to the cytoplasm. The enzyme catalyses a (3R)-hydroxyacyl-[ACP] = a (2E)-enoyl-[ACP] + H2O. In terms of biological role, involved in unsaturated fatty acids biosynthesis. Catalyzes the dehydration of short chain beta-hydroxyacyl-ACPs and long chain saturated and unsaturated beta-hydroxyacyl-ACPs. The protein is 3-hydroxyacyl-[acyl-carrier-protein] dehydratase FabZ of Methylococcus capsulatus (strain ATCC 33009 / NCIMB 11132 / Bath).